The chain runs to 516 residues: Histidine ammonia-lyase 1 (516 aa).

The segment at residues 147–149 is a cross-link (5-imidazolinone (Ser-Gly)); the sequence is SSG. Ser-148 is subject to 2,3-didehydroalanine (Ser).

This sequence belongs to the PAL/histidase family. Contains an active site 4-methylidene-imidazol-5-one (MIO), which is formed autocatalytically by cyclization and dehydration of residues Ser-Ser-Gly.

The protein resides in the cytoplasm. The catalysed reaction is L-histidine = trans-urocanate + NH4(+). Its pathway is amino-acid degradation; L-histidine degradation into L-glutamate; N-formimidoyl-L-glutamate from L-histidine: step 1/3. The chain is Histidine ammonia-lyase 1 (hutH1) from Fusobacterium nucleatum subsp. nucleatum (strain ATCC 25586 / DSM 15643 / BCRC 10681 / CIP 101130 / JCM 8532 / KCTC 2640 / LMG 13131 / VPI 4355).